Here is a 433-residue protein sequence, read N- to C-terminus: UPF0597 protein Spea_0809 (433 aa).

The protein belongs to the UPF0597 family.

The polypeptide is UPF0597 protein Spea_0809 (Shewanella pealeana (strain ATCC 700345 / ANG-SQ1)).